Consider the following 341-residue polypeptide: MSSIIRYDWTAEELHALFDLSLPELLYRAASVHRQHFDPAEIQVSTLLSVKTGGCPEDCSYCPQAQRYDTGVTAQKLMDVDAVVAKARQAKLAGASRFCMGAAWRSPKDRDIPKIAAMIREVKALGLETCATLGMLNTCQAQALKDAGLDYYNHNVDTSPDFYDSVIHTRQYQDRLDTLAHVRDVGLKTCCGGIVGMGETRQHRVGLLLTLATLPAHPDSVPVNLLVQVAGTPLHGTQTLDPFEFVRMIAVARITMPRSMVRLSAGRESMSDELQLLCFMAGANSIFYGEKLLTTANPETERDQALFQRLGLRPMHLMENVSNQDQHHGNVHADIACKHVV.

Positions 40-267 (AEIQVSTLLS…RSMVRLSAGR (228 aa)) constitute a Radical SAM core domain. 3 residues coordinate [4Fe-4S] cluster: cysteine 55, cysteine 59, and cysteine 62. [2Fe-2S] cluster is bound by residues cysteine 99, cysteine 130, cysteine 190, and arginine 262.

It belongs to the radical SAM superfamily. Biotin synthase family. In terms of assembly, homodimer. It depends on [4Fe-4S] cluster as a cofactor. Requires [2Fe-2S] cluster as cofactor.

It catalyses the reaction (4R,5S)-dethiobiotin + (sulfur carrier)-SH + 2 reduced [2Fe-2S]-[ferredoxin] + 2 S-adenosyl-L-methionine = (sulfur carrier)-H + biotin + 2 5'-deoxyadenosine + 2 L-methionine + 2 oxidized [2Fe-2S]-[ferredoxin]. Its pathway is cofactor biosynthesis; biotin biosynthesis; biotin from 7,8-diaminononanoate: step 2/2. Functionally, catalyzes the conversion of dethiobiotin (DTB) to biotin by the insertion of a sulfur atom into dethiobiotin via a radical-based mechanism. The protein is Biotin synthase of Xylella fastidiosa (strain 9a5c).